A 59-amino-acid polypeptide reads, in one-letter code: Large ribosomal subunit protein bL32 (59 aa).

The protein belongs to the bacterial ribosomal protein bL32 family. In terms of assembly, part of the 50S ribosomal subunit.

The sequence is that of Large ribosomal subunit protein bL32 (rpmF) from Bacillus subtilis (strain 168).